A 574-amino-acid polypeptide reads, in one-letter code: Arginine--tRNA ligase (574 aa).

The 'HIGH' region signature appears at 126–136 (PNIAKRMHVGH).

It belongs to the class-I aminoacyl-tRNA synthetase family. In terms of assembly, monomer.

The protein resides in the cytoplasm. The enzyme catalyses tRNA(Arg) + L-arginine + ATP = L-arginyl-tRNA(Arg) + AMP + diphosphate. The protein is Arginine--tRNA ligase of Chloroflexus aurantiacus (strain ATCC 29366 / DSM 635 / J-10-fl).